The primary structure comprises 641 residues: ATP-dependent DNA helicase PIF1 (641 aa).

Positions 1-180 (MLSGIEAAAG…LVKRPVEPQA (180 aa)) are PINT. Phosphoserine is present on residues S27 and S151. The hydrolyzes ATP in the presence of both magnesium and single-stranded DNA; weak activity in the presence of RNA or double-stranded DNA; No unwinding activity stretch occupies residues 167–641 (PDTTLVKRPV…SDQENMDPIL (475 aa)). Positions 173 to 192 (KRPVEPQAGAEPSTEAPRWP) are disordered. 228–235 (GSAGTGKS) contacts ATP. The DNA-binding element occupies 577–596 (QAYVALSRARSLQGLRVLDF). The segment at 622–641 (LESPDDDEAASDQENMDPIL) is disordered. A compositionally biased stretch (acidic residues) spans 624 to 641 (SPDDDEAASDQENMDPIL).

It belongs to the helicase family. PIF1 subfamily. As to quaternary structure, monomer. Interacts with telomerase. It depends on Mg(2+) as a cofactor. In terms of tissue distribution, weak ubiquitous expression.

Its subcellular location is the nucleus. The protein resides in the mitochondrion. The enzyme catalyses Couples ATP hydrolysis with the unwinding of duplex DNA at the replication fork by translocating in the 5'-3' direction. This creates two antiparallel DNA single strands (ssDNA). The leading ssDNA polymer is the template for DNA polymerase III holoenzyme which synthesizes a continuous strand.. It catalyses the reaction ATP + H2O = ADP + phosphate + H(+). DNA-dependent ATPase and 5'-3' DNA helicase required for the maintenance of both mitochondrial and nuclear genome stability. Efficiently unwinds G-quadruplex (G4) DNA structures and forked RNA-DNA hybrids. Resolves G4 structures, preventing replication pausing and double-strand breaks (DSBs) at G4 motifs. Involved in the maintenance of telomeric DNA. Inhibits telomere elongation, de novo telomere formation and telomere addition to DSBs via catalytic inhibition of telomerase. Reduces the processivity of telomerase by displacing active telomerase from DNA ends. Releases telomerase by unwinding the short telomerase RNA/telomeric DNA hybrid that is the intermediate in the telomerase reaction. Possesses an intrinsic strand annealing activity. The sequence is that of ATP-dependent DNA helicase PIF1 from Homo sapiens (Human).